Reading from the N-terminus, the 65-residue chain is Large ribosomal subunit protein bL33m (65 aa).

The N-terminal 8 residues, 1 to 8, are a transit peptide targeting the mitochondrion; that stretch reads MFLSAVFF.

The protein belongs to the bacterial ribosomal protein bL33 family. Component of the mitochondrial large ribosomal subunit (mt-LSU). Mature mammalian 55S mitochondrial ribosomes consist of a small (28S) and a large (39S) subunit. The 28S small subunit contains a 12S ribosomal RNA (12S mt-rRNA) and 30 different proteins. The 39S large subunit contains a 16S rRNA (16S mt-rRNA), a copy of mitochondrial valine transfer RNA (mt-tRNA(Val)), which plays an integral structural role, and 52 different proteins.

Its subcellular location is the mitochondrion. The polypeptide is Large ribosomal subunit protein bL33m (MRPL33) (Homo sapiens (Human)).